Reading from the N-terminus, the 289-residue chain is tRNA U34 carboxymethyltransferase (289 aa).

Carboxy-S-adenosyl-L-methionine is bound by residues Lys-60, Trp-74, Lys-79, Gly-98, 120-122, 147-148, Tyr-167, and Arg-282; these read DPS and VE.

Belongs to the class I-like SAM-binding methyltransferase superfamily. CmoB family. In terms of assembly, homotetramer.

The enzyme catalyses carboxy-S-adenosyl-L-methionine + 5-hydroxyuridine(34) in tRNA = 5-carboxymethoxyuridine(34) in tRNA + S-adenosyl-L-homocysteine + H(+). Catalyzes carboxymethyl transfer from carboxy-S-adenosyl-L-methionine (Cx-SAM) to 5-hydroxyuridine (ho5U) to form 5-carboxymethoxyuridine (cmo5U) at position 34 in tRNAs. In Campylobacter concisus (strain 13826), this protein is tRNA U34 carboxymethyltransferase.